The following is a 443-amino-acid chain: Trigger factor (443 aa).

In terms of domain architecture, PPIase FKBP-type spans 163–248 (GDTAVIDFEG…INEIKAKELP (86 aa)).

The protein belongs to the FKBP-type PPIase family. Tig subfamily.

Its subcellular location is the cytoplasm. It catalyses the reaction [protein]-peptidylproline (omega=180) = [protein]-peptidylproline (omega=0). Functionally, involved in protein export. Acts as a chaperone by maintaining the newly synthesized protein in an open conformation. Functions as a peptidyl-prolyl cis-trans isomerase. The polypeptide is Trigger factor (Agathobacter rectalis (strain ATCC 33656 / DSM 3377 / JCM 17463 / KCTC 5835 / VPI 0990) (Eubacterium rectale)).